Consider the following 167-residue polypeptide: Leptin (167 aa).

An N-terminal signal peptide occupies residues 1–21 (MRCGPLCRFLWLWPYLSCVEA). The cysteines at positions 117 and 167 are disulfide-linked.

It belongs to the leptin family.

The protein localises to the secreted. Functionally, key player in the regulation of energy balance and body weight control. Once released into the circulation, has central and peripheral effects by binding LEPR, found in many tissues, which results in the activation of several major signaling pathways. In the hypothalamus, acts as an appetite-regulating factor that induces a decrease in food intake and an increase in energy consumption by inducing anorexinogenic factors and suppressing orexigenic neuropeptides, also regulates bone mass and secretion of hypothalamo-pituitary-adrenal hormones. In the periphery, increases basal metabolism, influences reproductive function, regulates pancreatic beta-cell function and insulin secretion, is pro-angiogenic for endothelial cell and affects innate and adaptive immunity. In the arcuate nucleus of the hypothalamus, activates by depolarization POMC neurons inducing FOS and SOCS3 expression to release anorexigenic peptides and inhibits by hyperpolarization NPY neurons inducing SOCS3 with a consequent reduction on release of orexigenic peptides. In addition to its known satiety inducing effect, has a modulatory role in nutrient absorption. In the intestine, reduces glucose absorption by enterocytes by activating PKC and leading to a sequential activation of p38, PI3K and ERK signaling pathways which exerts an inhibitory effect on glucose absorption. Acts as a growth factor on certain tissues, through the activation of different signaling pathways increases expression of genes involved in cell cycle regulation such as CCND1, via JAK2-STAT3 pathway, or VEGFA, via MAPK1/3 and PI3K-AKT1 pathways. May also play an apoptotic role via JAK2-STAT3 pathway and up-regulation of BIRC5 expression. Pro-angiogenic, has mitogenic activity on vascular endothelial cells and plays a role in matrix remodeling by regulating the expression of matrix metalloproteinases (MMPs) and tissue inhibitors of metalloproteinases (TIMPs). In innate immunity, modulates the activity and function of neutrophils by increasing chemotaxis and the secretion of oxygen radicals. Increases phagocytosis by macrophages and enhances secretion of pro-inflammatory mediators. Increases cytotoxic ability of NK cells. Plays a pro-inflammatory role, in synergy with IL1B, by inducing NOS2 which promotes the production of IL6, IL8 and Prostaglandin E2, through a signaling pathway that involves JAK2, PI3K, MAP2K1/MEK1 and MAPK14/p38. In adaptive immunity, promotes the switch of memory T-cells towards T helper-1 cell immune responses. Increases CD4(+)CD25(-) T-cell proliferation and reduces autophagy during TCR (T-cell receptor) stimulation, through MTOR signaling pathway activation and BCL2 up-regulation. The protein is Leptin (LEP) of Canis lupus familiaris (Dog).